Consider the following 353-residue polypeptide: Protein RecA (353 aa).

Residue 67–74 (GPESSGKT) coordinates ATP. Positions 330–353 (SNPNSTPDFSVDDSEGVAETNEDF) are disordered. Positions 339–353 (SVDDSEGVAETNEDF) are enriched in acidic residues.

It belongs to the RecA family.

The protein localises to the cytoplasm. Functionally, can catalyze the hydrolysis of ATP in the presence of single-stranded DNA, the ATP-dependent uptake of single-stranded DNA by duplex DNA, and the ATP-dependent hybridization of homologous single-stranded DNAs. It interacts with LexA causing its activation and leading to its autocatalytic cleavage. The protein is Protein RecA of Escherichia coli O157:H7 (strain EC4115 / EHEC).